A 344-amino-acid chain; its full sequence is Zinc metalloproteinase nas-6 (344 aa).

An N-terminal signal peptide occupies residues 1-19 (MLDHVLLLTYCLVSTVVRS). Positions 72-266 (NALKNKQLTW…VKINKLYSCK (195 aa)) constitute a Peptidase M12A domain. 5 cysteine pairs are disulfide-bonded: C114–C265, C135–C154, C300–C334, C307–C327, and C314–C331. H162 is a Zn(2+) binding site. E163 is a catalytic residue. The Zn(2+) site is built by H166 and H172. Residues 300–334 (CVDHFADCPHFAQYCTRASFFFVMKSYCPFTCKHC) enclose the ShKT domain.

It depends on Zn(2+) as a cofactor. Expressed in pharyngeal and body wall muscles, intestine, hypodermis and pharyngeal mc2 cells.

The protein localises to the secreted. Metalloprotease. In Caenorhabditis elegans, this protein is Zinc metalloproteinase nas-6 (nas-6).